The following is a 384-amino-acid chain: Urea transporter 1 (384 aa).

The residue at position 39 (E39) is a Phosphoserine. 5 consecutive transmembrane segments (helical) span residues 61–81 (ISQV…VGLL), 85–105 (PWWA…ALLL), 111–131 (AIAA…MAVF), 138–158 (FWWL…FSSA), and 168–188 (LPVF…ATGH). N-linked (GlcNAc...) asparagine glycosylation occurs at N206. Helical transmembrane passes span 250 to 270 (LMCL…LSLA), 276 to 296 (IYFG…GGMF), 305 to 325 (LLAL…AHLM), and 327 to 347 (VVHL…FLLL).

Belongs to the urea transporter family. In terms of assembly, homotrimer; each subunit contains a pore through which urea permeates. Identified in a complex with STOM. N-glycosylated in red blood cells, as well as in most non-erythroid tissues, except in the gastrocnemius muscle and in the gastrointestinal tract, including liver, colon and stomach. Expressed in brain, kidney, heart, liver, lung, skeletal muscle, spleen, testis, ureter and urinary bladder (at protein level). Along the gastrointestinal tract, detected in colon, jejunum and stomach (at protein level). In the kidney, expressed in some microvessels of the inner and outer medulla, but not all (at protein level). Not detected in the cortex (at protein level). Detected in the urothelium all along the urinary tract, including the papilla surface, the ureter, the bladder and the urethra (at protein level). In the brain, expressed at the border of the corpus callosum and striatum in astrocytic cellular processes surrounding blood microvessels (at protein level). Detected in erythrocytes (at protein level).

It is found in the cell membrane. The protein resides in the basolateral cell membrane. It carries out the reaction urea(in) = urea(out). Mediates the transport of urea driven by a concentration gradient across the cell membranes of erythrocytes and the renal inner medullary collecting duct which is critical to the urinary concentrating mechanism. Facilitates water transport in erythrocytes. The protein is Urea transporter 1 (Slc14a1) of Mus musculus (Mouse).